A 339-amino-acid chain; its full sequence is MVKGTIKEKYGIHIRQLSMYQHTYQCFQTPNSYFLIVPVSQFSETELAELYYMSQYLQEQSDPYVSVFIFTKEGELTFEHEGKTYALLKAAPPYSNRAFSIGAELAEFHRKGRGYPYEVKAAGRIGQWKDLWGKRIDQLEAFWQRKVQTPPHEPFDKKMIESFPYYLGLSENAIQYLVDTELDDKPQAADSGTICHQRMERHTWSPESLIRIPADWVFDHASRDLAEYMRHTFLHHRQDFNQQGFLFLQEYEQVTPLSSFSKRLLYSRLLFPLHYFEIVESYYMSSESEKHYFEEQLDFILNDCGRYEQFLNTAQEFMNMRAQKLFVPRVSWLGKGSSR.

Belongs to the CotS family.

The protein resides in the forespore outer membrane. It is found in the spore coat. Involved in sporulation. This chain is Endospore coat-associated protein YutH (yutH), found in Bacillus subtilis (strain 168).